A 272-amino-acid chain; its full sequence is Arylesterase (272 aa).

In terms of domain architecture, AB hydrolase-1 spans 21–253 (KPVLFSHGWL…LKVYKDAPHG (233 aa)). W29 is a binding site for acetate. Residue S95 is part of the active site. M96 provides a ligand contact to acetate. Residues D223 and H252 contribute to the active site.

It belongs to the AB hydrolase superfamily. Bacterial non-heme haloperoxidase / perhydrolase family. Dimer of trimers.

The enzyme catalyses a phenyl acetate + H2O = a phenol + acetate + H(+). It carries out the reaction peracetic acid + H2O = acetate + H2O2 + H(+). It catalyses the reaction a percarboxylic acid + H2O = a carboxylate + H2O2 + H(+). Hydrolyzes phenolic esters, such as phenyl acetate, nitrophenyl acetate and naphtyl acetate. Can act on a wide range of esters, but reaction rate and enantioselectivity differ significantly depending on the substrate. Shows a preference for esters with small acyl groups. Also shows low perhydrolase activity, and catalyzes the reversible formation of peroxycarboxylic acids from carboxylic acids and hydrogen peroxide. In vitro, enzyme-generated peracetic acid oxidizes bromide ion to bromonium, which reacts with monochlorodimedone to form bromochlorodimedone. The sequence is that of Arylesterase from Pseudomonas fluorescens.